The following is a 1502-amino-acid chain: MSNTPYNSSVPSIASMTQSSVSRSPNMHTATTPGANTSSNSPPLHMSSDSSKIKRKRNRIPLSCTICRKRKVKCDKLRPHCQQCTKTGVAHLCHYMEQTWAEEAEKELLKDNELKKLRERVKSLEKTLSKVHSSPSSNSLKSYNTPESSNLFMGSDEHTTLVNANTGSASSASHMHQQQQQQQQQEQQQDFSRSANANANSSSLSISNKYDNDELDLTKDFDLLHIKSNGTIHLGATHWLSIMKGDPYLKLLWGHIFAMREKLNEWYYQKNSYSKLKSSKCPINHAQAPPSAAAAATRKCPVDHSAFSSGMVAPKEETPLPRKCPVDHTMFSSGMIPPREDTSSQKRCPVDHTMYSAGMMPPKDETPSPFSTKAMIDHNKHTMNPPQSKCPVDHRNYMKDYPSDMANSSSNPASRCPIDHSSMKNTAALPASTHNTIPHHQPQSGSHARSHPAQSRKHDSYMTESEVLATLCEMLPPKRVIALFIEKFFKHLYPAIPILDEQNFKNHVNQMLSLSSMNPTVNNFGMSMPSSSTLENQPITQINLPKLSDSCNLGILIIILRLTWLSIPSNSCEVDLGEESGSFLVPNESSNMSASALTSMAKEESLLLKHETPVEALELCQKYLIKFDELSSISNNNVNLTTVQFAIFYNFYMKSASNDLTTLTNTNNTGMANPGHDSESHQILLSNITQMAFSCGLHRDPDNFPQLNATIPATSQDVSNNGSKKANPSTNPTLNNNMSAATTNSSSRSGSADSRSGSNPVNKKENQVSIERFKHTWRKIWYYIVSMDVNQSLSLGSPRLLRNLRDFSDTKLPSASRIDYVRDIKELIIVKNFTLFFQIDLCIIAVLNHILNVSLARSVRKFELDSLINLLKNLTYGTENVNDVVSSLINKGLLPTSEGGSVDSNNDEIYGLPKLPDILNHGQHNQNLYADGRNTSSSDIDKKLDLPHESTTRALFFSKHMTIRMLLYLLNYILFTHYEPMGSEDPGTNILAKEYAQEALNFAMDGYRNCMIFFNNIRNTNSLFDYMNVILSYPCLDIGHRSLQFIVCLILRAKCGPLTGMRESSIITNGTSSGFNSSVEDEDVKVKQESSDELKKDDFMKDVNLDSGDSLAEILMSRMLLFQKLTKQLSKKYNYAIRMNKSTGFFVSLLDTPSKKSDSKSGGSSFMLGNWKHPKVSNMSGFLAGDKDQLQKCPVYQDALGFVSPTGANEGSAPMQGMSLQGSTARMGGTQLPPIRSYKPITYTSSNLRRMNETGEAEAKRRRFNDGYIDNNSNNDIPRGISPKPSNGLSSVQPLLSSFSMNQLNGGTIPTVPSLTNITSQMGALPSLDRITTNQINLPDPSRDEAFDNSIKQMTPMTSAFMNANTTIPSSTLNGNMNMNGAGTANTDTSANGSALSTLTSPQGSDLASNSATQYKPDLEDFLMQNSNFNGLMINPSSLVEVVGGYNDPNNLGRNDAVDFLPVDNVEIDGVGIKINYHLLTSIYVTSILSYTVLEDDANDEK.

The span at 1 to 50 shows a compositional bias: polar residues; the sequence is MSNTPYNSSVPSIASMTQSSVSRSPNMHTATTPGANTSSNSPPLHMSSDS. The segment at 1 to 56 is disordered; it reads MSNTPYNSSVPSIASMTQSSVSRSPNMHTATTPGANTSSNSPPLHMSSDSSKIKRK. Zn(2+) is bound by residues cysteine 64, cysteine 67, cysteine 74, cysteine 81, cysteine 84, and cysteine 93. Positions 64–93 form a DNA-binding region, zn(2)-C6 fungal-type; sequence CTICRKRKVKCDKLRPHCQQCTKTGVAHLC. Positions 105–134 form a coiled coil; that stretch reads EKELLKDNELKKLRERVKSLEKTLSKVHSS. The interval 126 to 208 is disordered; the sequence is KTLSKVHSSP…ANSSSLSISN (83 aa). Over residues 130-142 the composition is skewed to low complexity; sequence KVHSSPSSNSLKS. Composition is skewed to polar residues over residues 143–152 and 160–176; these read YNTPESSNLF and TLVNANTGSASSASHMH. Over residues 177-208 the composition is skewed to low complexity; that stretch reads QQQQQQQQQEQQQDFSRSANANANSSSLSISN. Residues 244–444 are heme-responsive; required for HMC formation; it reads KGDPYLKLLW…NTIPHHQPQS (201 aa). HRM repeat units follow at residues 280-285, 299-304, 323-328, 347-352, 389-394, and 415-420; these read KCPINH, KCPVDH, RCPVDH, and RCPIDH. 2 stretches are compositionally biased toward polar residues: residues 432 to 447 and 706 to 734; these read STHNTIPHHQPQSGSH and QLNATIPATSQDVSNNGSKKANPSTNPTL. Disordered regions lie at residues 432 to 458 and 706 to 767; these read STHNTIPHHQPQSGSHARSHPAQSRKH and QLNA…KENQ. A compositionally biased stretch (low complexity) spans 735-759; that stretch reads NNNMSAATTNSSSRSGSADSRSGSN. Residues 1192-1197 form an HRM 7 repeat; it reads KCPVYQ. Positions 1384–1411 are disordered; the sequence is TANTDTSANGSALSTLTSPQGSDLASNS. Residues 1388 to 1411 are compositionally biased toward polar residues; the sequence is DTSANGSALSTLTSPQGSDLASNS.

As to quaternary structure, binds DNA as a homodimer. Interacts with SRO9 and YDJ1. In the absence of heme, binds to at least four cellular proteins, including YDJ1 and SRO9, forming a high-molecular-weight complex (HMC) which results in repression of its activity and dictates its DNA-binding specificity.

It localises to the nucleus. In terms of biological role, regulation of oxygen dependent gene expression. It modulates the expression of Iso-1 (CYP1) and Iso-2 (CYP3) cytochrome c. In response to heme, promotes transcription of genes encoding functions required for respiration, controlling oxidative damage and repression of anaerobic genes. Binds to the sequence 5'-CGGNNNTNNCGG-3'. Is non-functional in terms of iso-1 cytochrome c expression in strain S288c and its derivatives. This is Heme-responsive zinc finger transcription factor HAP1 (HAP1) from Saccharomyces cerevisiae (strain ATCC 204508 / S288c) (Baker's yeast).